We begin with the raw amino-acid sequence, 476 residues long: Glutamate--tRNA ligase (476 aa).

Residues 9–19 (PSPTGTLHLGT) carry the 'HIGH' region motif. A 'KMSKS' region motif is present at residues 248–252 (KLSKR). Lysine 251 provides a ligand contact to ATP.

The protein belongs to the class-I aminoacyl-tRNA synthetase family. Glutamate--tRNA ligase type 1 subfamily. As to quaternary structure, monomer.

Its subcellular location is the cytoplasm. It catalyses the reaction tRNA(Glu) + L-glutamate + ATP = L-glutamyl-tRNA(Glu) + AMP + diphosphate. In terms of biological role, catalyzes the attachment of glutamate to tRNA(Glu) in a two-step reaction: glutamate is first activated by ATP to form Glu-AMP and then transferred to the acceptor end of tRNA(Glu). The polypeptide is Glutamate--tRNA ligase (Prochlorococcus marinus (strain NATL2A)).